The primary structure comprises 540 residues: Probable ATP-dependent RNA helicase DDX28 (540 aa).

Positions 3–18 match the Mitochondrial targeting signal motif; it reads LAGPSRLLALAVRLLL. The Q motif motif lies at 126 to 156; that stretch reads GSFVDLGLEPRVLLALQEAVPEVVQPTSVQS. One can recognise a Helicase ATP-binding domain in the interval 159–351; that stretch reads IPPLLRGRHL…SKVTSPDSLT (193 aa). 172–179 is an ATP binding site; the sequence is AETGSGKT. Positions 180 to 191 match the Nuclear export signal motif; the sequence is LSYLLPLFQRLL. Positions 286–289 match the DEAD motif; that stretch reads DEVD. The Helicase C-terminal domain maps to 377–536; sequence KVTELVQILK…GLASSVGDPL (160 aa). The Nuclear localization signal signature appears at 520 to 523; sequence RRRR.

This sequence belongs to the DEAD box helicase family. Monomer. Found in a complex with GRSF1, DHX30, FASTKD2 and FASTKD5. Associates with the 16S mitochondrial rRNA (16S mt-rRNA) and with the mitochondrial ribosome large subunit (39S).

It is found in the nucleus. The protein resides in the mitochondrion. It localises to the mitochondrion matrix. Its subcellular location is the mitochondrion nucleoid. The catalysed reaction is ATP + H2O = ADP + phosphate + H(+). Its function is as follows. Plays an essential role in facilitating the proper assembly of the mitochondrial large ribosomal subunit and its helicase activity is essential for this function. May be involved in RNA processing or transport. Has RNA and Mg(2+)-dependent ATPase activity. This chain is Probable ATP-dependent RNA helicase DDX28 (Ddx28), found in Mus musculus (Mouse).